The primary structure comprises 305 residues: Coenzyme PQQ synthesis protein B (305 aa).

The protein belongs to the PqqB family.

The protein operates within cofactor biosynthesis; pyrroloquinoline quinone biosynthesis. Its function is as follows. May be involved in the transport of PQQ or its precursor to the periplasm. In Cupriavidus taiwanensis (strain DSM 17343 / BCRC 17206 / CCUG 44338 / CIP 107171 / LMG 19424 / R1) (Ralstonia taiwanensis (strain LMG 19424)), this protein is Coenzyme PQQ synthesis protein B.